The chain runs to 194 residues: Xanthine phosphoribosyltransferase (194 aa).

2 residues coordinate xanthine: Leu20 and Asn27. Residue 128-132 (ANGQA) coordinates 5-phospho-alpha-D-ribose 1-diphosphate. Lys156 lines the xanthine pocket.

The protein belongs to the purine/pyrimidine phosphoribosyltransferase family. Xpt subfamily. Homodimer.

It is found in the cytoplasm. It catalyses the reaction XMP + diphosphate = xanthine + 5-phospho-alpha-D-ribose 1-diphosphate. The protein operates within purine metabolism; XMP biosynthesis via salvage pathway; XMP from xanthine: step 1/1. Functionally, converts the preformed base xanthine, a product of nucleic acid breakdown, to xanthosine 5'-monophosphate (XMP), so it can be reused for RNA or DNA synthesis. The polypeptide is Xanthine phosphoribosyltransferase (Geobacillus thermodenitrificans (strain NG80-2)).